The chain runs to 186 residues: Large ribosomal subunit protein uL5 (186 aa).

Belongs to the universal ribosomal protein uL5 family. In terms of assembly, part of the 50S ribosomal subunit; part of the 5S rRNA/L5/L18/L25 subcomplex. Contacts the 5S rRNA and the P site tRNA. Forms a bridge to the 30S subunit in the 70S ribosome.

This is one of the proteins that bind and probably mediate the attachment of the 5S RNA into the large ribosomal subunit, where it forms part of the central protuberance. In the 70S ribosome it contacts protein S13 of the 30S subunit (bridge B1b), connecting the 2 subunits; this bridge is implicated in subunit movement. Contacts the P site tRNA; the 5S rRNA and some of its associated proteins might help stabilize positioning of ribosome-bound tRNAs. The chain is Large ribosomal subunit protein uL5 from Phenylobacterium zucineum (strain HLK1).